The chain runs to 499 residues: Putative hydrolase YuaR (499 aa).

Residues 1-26 (MRVIMKPLRRTLVFFIFSVFLCGTVS) form the signal peptide. The AB hydrolase-1 domain maps to 94–393 (GSVIIISGGP…DAFPAVNFER (300 aa)). Ser207 functions as the Nucleophile in the catalytic mechanism. Asp433 is an active-site residue. Residue His460 is the Proton donor of the active site.

It belongs to the peptidase S33 family.

This Escherichia coli (strain K12) protein is Putative hydrolase YuaR (yuaR).